The chain runs to 119 residues: DNA-directed RNA polymerase subunit omega (119 aa).

Belongs to the RNA polymerase subunit omega family. The RNAP catalytic core consists of 2 alpha, 1 beta, 1 beta' and 1 omega subunit. When a sigma factor is associated with the core the holoenzyme is formed, which can initiate transcription.

It carries out the reaction RNA(n) + a ribonucleoside 5'-triphosphate = RNA(n+1) + diphosphate. In terms of biological role, promotes RNA polymerase assembly. Latches the N- and C-terminal regions of the beta' subunit thereby facilitating its interaction with the beta and alpha subunits. This chain is DNA-directed RNA polymerase subunit omega, found in Caulobacter sp. (strain K31).